A 230-amino-acid polypeptide reads, in one-letter code: Large ribosomal subunit protein uL1 (230 aa).

The protein belongs to the universal ribosomal protein uL1 family. In terms of assembly, part of the 50S ribosomal subunit.

Functionally, binds directly to 23S rRNA. The L1 stalk is quite mobile in the ribosome, and is involved in E site tRNA release. In terms of biological role, protein L1 is also a translational repressor protein, it controls the translation of the L11 operon by binding to its mRNA. The polypeptide is Large ribosomal subunit protein uL1 (Thermoanaerobacter sp. (strain X514)).